A 503-amino-acid chain; its full sequence is Probable cytosol aminopeptidase (503 aa).

Mn(2+) contacts are provided by Lys-268 and Asp-273. Lys-280 is an active-site residue. The Mn(2+) site is built by Asp-291, Asp-350, and Glu-352. The active site involves Arg-354.

It belongs to the peptidase M17 family. Requires Mn(2+) as cofactor.

The protein localises to the cytoplasm. It carries out the reaction Release of an N-terminal amino acid, Xaa-|-Yaa-, in which Xaa is preferably Leu, but may be other amino acids including Pro although not Arg or Lys, and Yaa may be Pro. Amino acid amides and methyl esters are also readily hydrolyzed, but rates on arylamides are exceedingly low.. It catalyses the reaction Release of an N-terminal amino acid, preferentially leucine, but not glutamic or aspartic acids.. In terms of biological role, presumably involved in the processing and regular turnover of intracellular proteins. Catalyzes the removal of unsubstituted N-terminal amino acids from various peptides. The sequence is that of Probable cytosol aminopeptidase from Corynebacterium efficiens (strain DSM 44549 / YS-314 / AJ 12310 / JCM 11189 / NBRC 100395).